Consider the following 500-residue polypeptide: L-arabinose isomerase (500 aa).

Residues Glu306, Glu333, His350, and His450 each coordinate Mn(2+).

It belongs to the arabinose isomerase family. Homohexamer. Mn(2+) is required as a cofactor.

The catalysed reaction is beta-L-arabinopyranose = L-ribulose. It participates in carbohydrate degradation; L-arabinose degradation via L-ribulose; D-xylulose 5-phosphate from L-arabinose (bacterial route): step 1/3. Catalyzes the conversion of L-arabinose to L-ribulose. In Yersinia pseudotuberculosis serotype I (strain IP32953), this protein is L-arabinose isomerase.